The chain runs to 324 residues: Putative GTPase PYRAB02490 (324 aa).

GTP is bound by residues 52–60 (GPPGAGKST), Asp194, and 229–231 (VAT).

This sequence belongs to the SIMIBI class G3E GTPase family. ArgK/MeaB subfamily.

Its function is as follows. May have GTPase activity. May also bind and hydrolyze ATP. May function as chaperone. The polypeptide is Putative GTPase PYRAB02490 (Pyrococcus abyssi (strain GE5 / Orsay)).